Reading from the N-terminus, the 24-residue chain is Transaldolase (24 aa).

It belongs to the transaldolase family.

The protein resides in the cytoplasm. It carries out the reaction D-sedoheptulose 7-phosphate + D-glyceraldehyde 3-phosphate = D-erythrose 4-phosphate + beta-D-fructose 6-phosphate. The protein operates within carbohydrate degradation; pentose phosphate pathway; D-glyceraldehyde 3-phosphate and beta-D-fructose 6-phosphate from D-ribose 5-phosphate and D-xylulose 5-phosphate (non-oxidative stage): step 2/3. Its function is as follows. Transaldolase is important for the balance of metabolites in the pentose-phosphate pathway. In Capsicum annuum var. annuum (Red pepper), this protein is Transaldolase.